Consider the following 236-residue polypeptide: 2-phospho-L-lactate guanylyltransferase (236 aa).

This sequence belongs to the CofC family. Homodimer.

It carries out the reaction (2S)-2-phospholactate + GTP + H(+) = (2S)-lactyl-2-diphospho-5'-guanosine + diphosphate. It participates in cofactor biosynthesis; coenzyme F420 biosynthesis. Guanylyltransferase that catalyzes the activation of (2S)-2-phospholactate (2-PL) as (2S)-lactyl-2-diphospho-5'-guanosine, via the condensation of 2-PL with GTP. It is involved in the biosynthesis of coenzyme F420, a hydride carrier cofactor. This is 2-phospho-L-lactate guanylyltransferase from Natrialba magadii (strain ATCC 43099 / DSM 3394 / CCM 3739 / CIP 104546 / IAM 13178 / JCM 8861 / NBRC 102185 / NCIMB 2190 / MS3) (Natronobacterium magadii).